Consider the following 184-residue polypeptide: Lactoylglutathione lyase (184 aa).

An N-acetylalanine modification is found at Ala-2. Cys-19 and Cys-20 form a disulfide bridge. Positions 31–177 (LLQQTMLRIK…DGYWIEILNP (147 aa)) constitute a VOC domain. 2 residues coordinate substrate: Gln-34 and Arg-38. Gln-34 lines the Zn(2+) pocket. Position 100 (Glu-100) interacts with Zn(2+). Asn-104 is a substrate binding site. At Thr-107 the chain carries Phosphothreonine. Residues Arg-123 and His-127 each contribute to the substrate site. Residue His-127 participates in Zn(2+) binding. At Cys-139 the chain carries S-glutathionyl cysteine. Lys-148 carries the N6-acetyllysine; alternate modification. Lys-148 is modified (N6-succinyllysine; alternate). 157 to 158 (KM) serves as a coordination point for substrate. Glu-173 contributes to the Zn(2+) binding site. Glu-173 functions as the Proton donor/acceptor in the catalytic mechanism.

This sequence belongs to the glyoxalase I family. Homodimer. Zn(2+) serves as cofactor. Glutathionylation at Cys-139 inhibits enzyme activity. Post-translationally, phosphorylated at Thr-107 in the presence of CaMK2. However, this is a consensus site for phosphorylation by CK2 so phosphorylation may be mediated by CK2 rather than CaMK2. Phosphorylation is induced by TNF and suppresses the TNF-induced transcriptional activity of NF-kappa-B. In terms of processing, exists in a nitric oxide (NO)-modified form. The exact nature of the modification is unknown, but it suppresses the TNF-induced transcriptional activity of NF-kappa-B.

The enzyme catalyses (R)-S-lactoylglutathione = methylglyoxal + glutathione. The protein operates within secondary metabolite metabolism; methylglyoxal degradation; (R)-lactate from methylglyoxal: step 1/2. Its function is as follows. Catalyzes the conversion of hemimercaptal, formed from methylglyoxal and glutathione, to S-lactoylglutathione. Involved in the regulation of TNF-induced transcriptional activity of NF-kappa-B. Required for normal osteoclastogenesis. The protein is Lactoylglutathione lyase (Glo1) of Rattus norvegicus (Rat).